Consider the following 63-residue polypeptide: H/ACA ribonucleoprotein complex subunit 3-like protein (63 aa).

A disordered region spans residues 18-40; that stretch reads KMDPEGKPTLSAHPARFSPDDKY.

The protein belongs to the NOP10 family. Component of the small nucleolar ribonucleoprotein particles containing H/ACA-type snoRNAs (H/ACA snoRNPs).

It is found in the nucleus. The protein resides in the nucleolus. Required for ribosome biogenesis. Part of a complex which catalyzes pseudouridylation of rRNA. This involves the isomerization of uridine such that the ribose is subsequently attached to C5, instead of the normal N1. Pseudouridine ('psi') residues may serve to stabilize the conformation of rRNAs. This chain is H/ACA ribonucleoprotein complex subunit 3-like protein, found in Trypanosoma cruzi.